A 203-amino-acid chain; its full sequence is Inosine triphosphate pyrophosphatase (203 aa).

10-15 provides a ligand contact to ITP; sequence TGNQNK. E40 is a binding site for Mg(2+). ITP is bound by residues K52, 68 to 69, K85, 145 to 148, K168, and 173 to 174; these read DT, FGWD, and HR.

Belongs to the HAM1 NTPase family. In terms of assembly, homodimer. It depends on Mg(2+) as a cofactor. Mn(2+) serves as cofactor.

The protein resides in the cytoplasm. It catalyses the reaction ITP + H2O = IMP + diphosphate + H(+). The enzyme catalyses dITP + H2O = dIMP + diphosphate + H(+). The catalysed reaction is XTP + H2O = XMP + diphosphate + H(+). Functionally, pyrophosphatase that hydrolyzes non-canonical purine nucleotides such as inosine triphosphate (ITP), deoxyinosine triphosphate (dITP) or xanthosine 5'-triphosphate (XTP) to their respective monophosphate derivatives. The enzyme does not distinguish between the deoxy- and ribose forms. Probably excludes non-canonical purines from RNA and DNA precursor pools, thus preventing their incorporation into RNA and DNA and avoiding chromosomal lesions. This Nematostella vectensis (Starlet sea anemone) protein is Inosine triphosphate pyrophosphatase.